The chain runs to 363 residues: Probable dual-specificity RNA methyltransferase RlmN (363 aa).

Glutamate 106 acts as the Proton acceptor in catalysis. Positions 112–345 (HEYGNSVCVT…VTIRREQGHD (234 aa)) constitute a Radical SAM core domain. A disulfide bridge connects residues cysteine 119 and cysteine 350. [4Fe-4S] cluster contacts are provided by cysteine 126, cysteine 130, and cysteine 133. Residues 176-177 (GE), serine 208, 231-233 (SLH), and asparagine 307 contribute to the S-adenosyl-L-methionine site. The S-methylcysteine intermediate role is filled by cysteine 350.

Belongs to the radical SAM superfamily. RlmN family. The cofactor is [4Fe-4S] cluster.

Its subcellular location is the cytoplasm. The enzyme catalyses adenosine(2503) in 23S rRNA + 2 reduced [2Fe-2S]-[ferredoxin] + 2 S-adenosyl-L-methionine = 2-methyladenosine(2503) in 23S rRNA + 5'-deoxyadenosine + L-methionine + 2 oxidized [2Fe-2S]-[ferredoxin] + S-adenosyl-L-homocysteine. It catalyses the reaction adenosine(37) in tRNA + 2 reduced [2Fe-2S]-[ferredoxin] + 2 S-adenosyl-L-methionine = 2-methyladenosine(37) in tRNA + 5'-deoxyadenosine + L-methionine + 2 oxidized [2Fe-2S]-[ferredoxin] + S-adenosyl-L-homocysteine. Its function is as follows. Specifically methylates position 2 of adenine 2503 in 23S rRNA and position 2 of adenine 37 in tRNAs. This is Probable dual-specificity RNA methyltransferase RlmN from Bacillus subtilis (strain 168).